The primary structure comprises 249 residues: Cytochrome c oxidase subunit 2 (249 aa).

Transmembrane regions (helical) follow at residues 40 to 60 and 81 to 101; these read NIMF…YTIT and IIWT…SFIL. Cu cation is bound by residues His184, Cys219, Glu221, Cys223, His227, and Met230. Glu221 contacts Mg(2+).

It belongs to the cytochrome c oxidase subunit 2 family. In terms of assembly, component of the cytochrome c oxidase (complex IV, CIV), a multisubunit enzyme composed of a catalytic core of 3 subunits and several supernumerary subunits. The complex exists as a monomer or a dimer and forms supercomplexes (SCs) in the inner mitochondrial membrane with ubiquinol-cytochrome c oxidoreductase (cytochrome b-c1 complex, complex III, CIII). Cu cation is required as a cofactor.

Its subcellular location is the mitochondrion inner membrane. The enzyme catalyses 4 Fe(II)-[cytochrome c] + O2 + 8 H(+)(in) = 4 Fe(III)-[cytochrome c] + 2 H2O + 4 H(+)(out). Component of the cytochrome c oxidase, the last enzyme in the mitochondrial electron transport chain which drives oxidative phosphorylation. The respiratory chain contains 3 multisubunit complexes succinate dehydrogenase (complex II, CII), ubiquinol-cytochrome c oxidoreductase (cytochrome b-c1 complex, complex III, CIII) and cytochrome c oxidase (complex IV, CIV), that cooperate to transfer electrons derived from NADH and succinate to molecular oxygen, creating an electrochemical gradient over the inner membrane that drives transmembrane transport and the ATP synthase. Cytochrome c oxidase is the component of the respiratory chain that catalyzes the reduction of oxygen to water. Electrons originating from reduced cytochrome c in the intermembrane space (IMS) are transferred via the dinuclear copper A center (CU(A)) of subunit 2 and heme A of subunit 1 to the active site in subunit 1, a binuclear center (BNC) formed by heme A3 and copper B (CU(B)). The BNC reduces molecular oxygen to 2 water molecules using 4 electrons from cytochrome c in the IMS and 4 protons from the mitochondrial matrix. This chain is Cytochrome c oxidase subunit 2 (COX2), found in Vanderwaltozyma polyspora (strain ATCC 22028 / DSM 70294 / BCRC 21397 / CBS 2163 / NBRC 10782 / NRRL Y-8283 / UCD 57-17) (Kluyveromyces polysporus).